A 525-amino-acid chain; its full sequence is Sensory neuron membrane protein 1 (525 aa).

Residues M1–A11 are Cytoplasmic-facing. A helical transmembrane segment spans residues I12 to L32. Over K33–R456 the chain is Extracellular. N-linked (GlcNAc...) asparagine glycosylation is found at N67, N105, and N229. Intrachain disulfides connect C268–C333, C297–C352, and C335–C341. N440 is a glycosylation site (N-linked (GlcNAc...) asparagine). Residues I457 to V477 form a helical membrane-spanning segment. The Cytoplasmic portion of the chain corresponds to M478 to M525. The tract at residues T496–M525 is disordered. Residues Q516–M525 show a composition bias toward basic and acidic residues.

Belongs to the CD36 family. In terms of tissue distribution, principal component of the olfactory cilia membrane. Localizes to the somata, dendritic neck and cilia of the olfactory neurons (at protein level). Not detected in the axons of ORNs, the cytoplasm of auxiliary cells or non-sensory structures. Expression is universal among ORNs but differential between neuron and sensillum types.

The protein resides in the cell membrane. Plays an olfactory role that is not restricted to pheromone sensitivity. May be involved in the odor detection properties of the olfactory receptor neurons (ORNs) rather than their differentiation and growth. This is Sensory neuron membrane protein 1 from Antheraea polyphemus (Polyphemus moth).